Here is a 466-residue protein sequence, read N- to C-terminus: Adenosylhomocysteinase (466 aa).

The substrate site is built by T57, D132, and E192. 193 to 195 provides a ligand contact to NAD(+); that stretch reads TTT. Positions 222 and 226 each coordinate substrate. NAD(+) contacts are provided by residues N227, 256-261, E279, N314, 335-337, and N380; these read GYGDVG and IGH.

Belongs to the adenosylhomocysteinase family. The cofactor is NAD(+).

The protein localises to the cytoplasm. It carries out the reaction S-adenosyl-L-homocysteine + H2O = L-homocysteine + adenosine. It participates in amino-acid biosynthesis; L-homocysteine biosynthesis; L-homocysteine from S-adenosyl-L-homocysteine: step 1/1. Its function is as follows. May play a key role in the regulation of the intracellular concentration of adenosylhomocysteine. This Chromobacterium violaceum (strain ATCC 12472 / DSM 30191 / JCM 1249 / CCUG 213 / NBRC 12614 / NCIMB 9131 / NCTC 9757 / MK) protein is Adenosylhomocysteinase.